Reading from the N-terminus, the 1284-residue chain is ATP-dependent helicase fft2 (1284 aa).

2 stretches are compositionally biased toward polar residues: residues 1 to 10 and 20 to 57; these read MLPYNSNYLS and ENPQSEVYGSSQTGLPSSYGNPQSYGTPPVQQSSAMYG. Disordered regions lie at residues 1–57, 185–252, 317–339, 353–388, and 446–465; these read MLPY…AMYG, AQPP…LPPV, KQSPVASNMPTYGSSNRTVQSQK, STQASLMPSYTRKTSNASKKLTTEEDEFYDSEEEPE, and PDDVPSKPGRRGRRREKNPM. Over residues 201–241 the composition is skewed to low complexity; that stretch reads RSNSRSSARSTARSAPRSTQRSRSSSANPVTTPPVNNTLLT. Polar residues-rich tracts occupy residues 320-339 and 353-372; these read PVASNMPTYGSSNRTVQSQK and STQASLMPSYTRKTSNASKK. Serine 323 carries the phosphoserine modification. Over residues 376–388 the composition is skewed to acidic residues; the sequence is EEDEFYDSEEEPE. Residue serine 383 is modified to Phosphoserine. The region spanning 562–730 is the Helicase ATP-binding domain; it reads HLLYQQKLSG…VSLLAFILPN (169 aa). ATP is bound at residue 575-582; sequence DEMGLGKT. The DEGH box signature appears at 681–684; the sequence is DEGH. Residues 816-839 are disordered; the sequence is QQLRRDDKRNKRSKNDEESDGKSL. Basic and acidic residues predominate over residues 818–831; sequence LRRDDKRNKRSKND. Residues 928–1079 enclose the Helicase C-terminal domain; it reads VLKELLPKMK…SLSSDGKDRE (152 aa). A disordered region spans residues 1088–1284; that stretch reads DMLDEENNGN…SEVDNNAAKD (197 aa). Positions 1095 to 1107 are enriched in polar residues; sequence NGNNTKPEITGNE. A compositionally biased stretch (basic and acidic residues) spans 1143 to 1177; the sequence is EKTDLADGDEKANIKTEMKSETVEGDNKELRETMK. Polar residues predominate over residues 1180-1194; the sequence is NVQTDSNAAVPSSKS. 2 stretches are compositionally biased toward basic and acidic residues: residues 1243 to 1256 and 1266 to 1284; these read QLEKPEIEESKKPD and EEEKPKNKESEVDNNAAKD.

It belongs to the SNF2/RAD54 helicase family.

It is found in the cytoplasm. The protein localises to the nucleus. The enzyme catalyses ATP + H2O = ADP + phosphate + H(+). Its function is as follows. DNA helicase that possesses intrinsic ATP-dependent nucleosome-remodeling activity and is required for heterochromatin organization. This is ATP-dependent helicase fft2 (fft2) from Schizosaccharomyces pombe (strain 972 / ATCC 24843) (Fission yeast).